The chain runs to 727 residues: MTPVQVPNLDVSVTSSLITTAPVTGNAATISTFTPGSPEPSMNGEEKESSYFPISENDDGTLDLFGDSELEKEQKGDNQETDYSSQYLHPTPPYTNFDDESPSSPTHPSVSNITVDGDSKKHSLQLQEEEKSSESLDSHTHPPKRVRNEDDSLTFSKTSPVSPSSLKDGASNTVTNDASNKIKSEASESASPSALQALDSTAAGSSKEHSSPHDETVKKEENDKDQYPPMTKEQHKYIHAMLRQLRRGRDSIPFRAPVDPVKQNIPDYPTIIKNPIDLGTMQKKFSSGVYSSAQHFIDDMNLMFSNCFLYNGTESPVGVMGKNLQATFERQLKQLPSAYVTSYSRPGRRPRSMTAPKGGARTRRQAAMYSNSSSGIRETMYDLKPHRRKDAAEMKFCQSVLKELLKKQHEAYAYPFYKPVNPTACGCPDYFKVIKHPMDLGTMQNKLNHNEYASMKAFEADMVLMFKNCYKFNSAGTPVHLMGKKLESIFQKLWANKPDFDSETYMGMSSVNTDYYYGDNEVFDSGDEFLEDDGEEFEAVNRQIHKLQSTLQAMKSRARSSSVSRRSRSRSLSVDIYPPITYEMQNELAEQCNYLSADQLSHVAEILRAALPHLRNTDEIEIDVSAMPPDVFYKVYYYVCKGDEIGAEALATASHTHQEKKKGRALSETEQAEKIRQLRAQLDRFSGIAQNKNTVTGNIAAYNTKSLGSDDSSSEDDGESSESSDSA.

2 disordered regions span residues A27 to T231 and T341 to Y369. The span at E56–S68 shows a compositional bias: acidic residues. Residues E69–N78 are compositionally biased toward basic and acidic residues. Over residues P102–T114 the composition is skewed to polar residues. Residues E128–D150 are compositionally biased toward basic and acidic residues. The segment covering L153–D177 has biased composition (polar residues). S162 bears the Phosphoserine mark. Basic and acidic residues predominate over residues S206–T231. The Bromo 1 domain maps to P229 to L335. In terms of domain architecture, Bromo 2 spans R388–K497. The NET domain maps to R570 to L650. The tract at residues I699–A727 is disordered. The segment covering S712–A727 has biased composition (acidic residues).

It belongs to the BET family.

Its subcellular location is the nucleus. The chain is Bromodomain-containing protein C631.02 from Schizosaccharomyces pombe (strain 972 / ATCC 24843) (Fission yeast).